The following is a 351-amino-acid chain: 7,8-didemethyl-8-hydroxy-5-deazariboflavin synthase (351 aa).

One can recognise a Radical SAM core domain in the interval isoleucine 35 to asparagine 275. [4Fe-4S] cluster is bound by residues cysteine 49, cysteine 53, and cysteine 56.

The protein belongs to the radical SAM superfamily. CofG family. In terms of assembly, consists of two subunits, CofG and CofH. The cofactor is [4Fe-4S] cluster.

It catalyses the reaction 5-amino-5-(4-hydroxybenzyl)-6-(D-ribitylimino)-5,6-dihydrouracil + S-adenosyl-L-methionine = 7,8-didemethyl-8-hydroxy-5-deazariboflavin + 5'-deoxyadenosine + L-methionine + NH4(+) + H(+). Its pathway is cofactor biosynthesis; coenzyme F0 biosynthesis. Its function is as follows. Catalyzes the radical-mediated synthesis of 7,8-didemethyl-8-hydroxy-5-deazariboflavin from 5-amino-5-(4-hydroxybenzyl)-6-(D-ribitylimino)-5,6-dihydrouracil. The chain is 7,8-didemethyl-8-hydroxy-5-deazariboflavin synthase from Methanococcus vannielii (strain ATCC 35089 / DSM 1224 / JCM 13029 / OCM 148 / SB).